The sequence spans 323 residues: Probable cell division protein WhiA (323 aa).

The segment at residues 275-309 is a DNA-binding region (H-T-H motif); that stretch reads TLKELGEMLTTGQVSKSGINHRLRKLDQIAERLRS.

The protein belongs to the WhiA family.

Involved in cell division and chromosome segregation. This chain is Probable cell division protein WhiA, found in Listeria monocytogenes serotype 4b (strain CLIP80459).